Here is a 491-residue protein sequence, read N- to C-terminus: Chondroitin proteoglycan 2 (491 aa).

The N-terminal stretch at 1–18 is a signal peptide; sequence MKTIVALGLLALATAASG. A Chitin-binding type-2 1 domain is found at 21–78; the sequence is LQDCTNALDGLYAIGNCESQFLTCSGGIARIMDCPADLIYNEPLLICDWRHNVVGCEG. Cys54 and Cys67 are oxidised to a cystine. Residues 80–126 are disordered; sequence GEASGEQSGEGSGEASGEGSGEASGEGSGEASGEGSGSGEGSGEENN. A compositionally biased stretch (gly residues) spans 87-120; sequence SGEGSGEASGEGSGEASGEGSGEASGEGSGSGEG. The Chitin-binding type-2 2 domain occupies 125–182; it reads NNVCEGLEDGAYSSGGCTTYYFFCTDNTARFLSCPTPLFYDVATQKCAWKALVEECNG. A disulfide bridge links Cys158 with Cys171. The disordered stretch occupies residues 187-217; the sequence is DGSGETSGEGSGEASGENSGENSGEGSGEFE. Ser197 and Ser201 each carry an O-linked (Xyl...) (chondroitin sulfate) serine glycan. A compositionally biased stretch (low complexity) spans 200 to 210; sequence ASGENSGENSG. Chitin-binding type-2 domains lie at 217–274, 279–334, 367–423, and 436–491; these read EPTC…ECHG, APVC…ECQE, ENEC…KCLI, and PFDC…LQCH. Intrachain disulfides connect Cys250-Cys263 and Cys310-Cys323. The interval 336 to 367 is disordered; sequence SGEESSGEASGEQSGEGSGEASGEASGEASGE. A compositionally biased stretch (low complexity) spans 356–367; that stretch reads ASGEASGEASGE. Cys399 and Cys412 are joined by a disulfide. Asn464 is a glycosylation site (N-linked (GlcNAc...) asparagine). An intrachain disulfide couples Cys467 to Cys481.

Functionally, required for polar body extrusion during cytokinesis in embryo development. Affects cortical granule size. Shown to have roles in meiotic chromosome segregation, osmotic barrier function and polarization in conjunction with cpg-2. Binds chitin. In Caenorhabditis briggsae, this protein is Chondroitin proteoglycan 2.